We begin with the raw amino-acid sequence, 80 residues long: uncharacterized protein (80 aa).

4Fe-4S ferredoxin-type domains lie at 21 to 49 and 50 to 80; these read KIIE…AIKN and NRVV…LYDA. [4Fe-4S] cluster contacts are provided by Cys-30, Cys-33, Cys-36, Cys-40, Cys-60, Cys-63, Cys-66, and Cys-70.

[4Fe-4S] cluster serves as cofactor.

This is an uncharacterized protein from Methanocaldococcus jannaschii (strain ATCC 43067 / DSM 2661 / JAL-1 / JCM 10045 / NBRC 100440) (Methanococcus jannaschii).